A 642-amino-acid chain; its full sequence is Medium-chain-fatty-acid--[acyl-carrier-protein] ligase TtuA (642 aa).

Belongs to the ATP-dependent AMP-binding enzyme family.

It carries out the reaction a medium-chain fatty acid + holo-[ACP] + ATP = a medium-chain fatty acyl-[ACP] + AMP + diphosphate. The catalysed reaction is a medium-chain fatty acid + ATP + H(+) = a medium-chain fatty acyl-AMP + diphosphate. It catalyses the reaction a medium-chain fatty acyl-AMP + holo-[ACP] = a medium-chain fatty acyl-[ACP] + AMP + H(+). The enzyme catalyses decanoate + holo-[ACP] + ATP = decanoyl-[ACP] + AMP + diphosphate. It carries out the reaction decanoate + ATP + H(+) = decanoyl-AMP + diphosphate. The catalysed reaction is decanoyl-AMP + holo-[ACP] = decanoyl-[ACP] + AMP + H(+). In terms of biological role, ligase likely involved in the biosynthesis of a polyyne metabolite. Catalyzes the activation of decanoic acid, followed by the loading of the activated decanoic acid onto the acyl carrier protein TtuC. Decanoic acid is the preferred substrate, but it can also use 10-undecenoic acid and lauric acid. Nonanoic acid and 7-octenoic acid are only weakly activated. In Teredinibacter turnerae (strain ATCC 39867 / T7901), this protein is Medium-chain-fatty-acid--[acyl-carrier-protein] ligase TtuA.